We begin with the raw amino-acid sequence, 155 residues long: Large ribosomal subunit protein uL30 (155 aa).

The protein belongs to the universal ribosomal protein uL30 family. Part of the 50S ribosomal subunit.

This chain is Large ribosomal subunit protein uL30, found in Cenarchaeum symbiosum (strain A).